The chain runs to 440 residues: Ribosomal protein uS12 methylthiotransferase RimO (440 aa).

Residues 1–117 form the MTTase N-terminal domain; that stretch reads MKIFFISLGC…ITEVIDKVLG (117 aa). C10, C46, C80, C154, C158, and C161 together coordinate [4Fe-4S] cluster. A Radical SAM core domain is found at 140–370; it reads TTGGYYSFLK…MEIQQGIAFE (231 aa). A TRAM domain is found at 373–440; the sequence is ESMVGRKLKV…KEYDLIGTAE (68 aa).

It belongs to the methylthiotransferase family. RimO subfamily. It depends on [4Fe-4S] cluster as a cofactor.

It is found in the cytoplasm. It carries out the reaction L-aspartate(89)-[ribosomal protein uS12]-hydrogen + (sulfur carrier)-SH + AH2 + 2 S-adenosyl-L-methionine = 3-methylsulfanyl-L-aspartate(89)-[ribosomal protein uS12]-hydrogen + (sulfur carrier)-H + 5'-deoxyadenosine + L-methionine + A + S-adenosyl-L-homocysteine + 2 H(+). Functionally, catalyzes the methylthiolation of an aspartic acid residue of ribosomal protein uS12. This is Ribosomal protein uS12 methylthiotransferase RimO from Lachnoclostridium phytofermentans (strain ATCC 700394 / DSM 18823 / ISDg) (Clostridium phytofermentans).